The chain runs to 436 residues: tRNA-2-methylthio-N(6)-dimethylallyladenosine synthase (436 aa).

An MTTase N-terminal domain is found at 5 to 121; the sequence is RKLFIKTYGC…LPDMLERTEG (117 aa). The [4Fe-4S] cluster site is built by Cys-14, Cys-50, Cys-84, Cys-158, Cys-162, and Cys-165. In terms of domain architecture, Radical SAM core spans 144-374; that stretch reads ATRGPAAFLT…TEQQRAAQMA (231 aa). Residues 373–435 form the TRAM domain; that stretch reads MAMVGREVGV…PNSLAGERLG (63 aa).

It belongs to the methylthiotransferase family. MiaB subfamily. In terms of assembly, monomer. [4Fe-4S] cluster is required as a cofactor.

It is found in the cytoplasm. It carries out the reaction N(6)-dimethylallyladenosine(37) in tRNA + (sulfur carrier)-SH + AH2 + 2 S-adenosyl-L-methionine = 2-methylsulfanyl-N(6)-dimethylallyladenosine(37) in tRNA + (sulfur carrier)-H + 5'-deoxyadenosine + L-methionine + A + S-adenosyl-L-homocysteine + 2 H(+). In terms of biological role, catalyzes the methylthiolation of N6-(dimethylallyl)adenosine (i(6)A), leading to the formation of 2-methylthio-N6-(dimethylallyl)adenosine (ms(2)i(6)A) at position 37 in tRNAs that read codons beginning with uridine. The sequence is that of tRNA-2-methylthio-N(6)-dimethylallyladenosine synthase from Cereibacter sphaeroides (strain ATCC 17023 / DSM 158 / JCM 6121 / CCUG 31486 / LMG 2827 / NBRC 12203 / NCIMB 8253 / ATH 2.4.1.) (Rhodobacter sphaeroides).